The following is a 114-amino-acid chain: Transmembrane protein 14C (114 aa).

The next 4 helical transmembrane spans lie at L8–I28, A33–A53, V63–N83, and P89–L109.

It belongs to the TMEM14 family.

It is found in the mitochondrion membrane. Required for normal heme biosynthesis. The chain is Transmembrane protein 14C (Tmem14c) from Mus musculus (Mouse).